Consider the following 230-residue polypeptide: 2-C-methyl-D-erythritol 4-phosphate cytidylyltransferase (230 aa).

This sequence belongs to the IspD/TarI cytidylyltransferase family. IspD subfamily.

The enzyme catalyses 2-C-methyl-D-erythritol 4-phosphate + CTP + H(+) = 4-CDP-2-C-methyl-D-erythritol + diphosphate. It functions in the pathway isoprenoid biosynthesis; isopentenyl diphosphate biosynthesis via DXP pathway; isopentenyl diphosphate from 1-deoxy-D-xylulose 5-phosphate: step 2/6. Its function is as follows. Catalyzes the formation of 4-diphosphocytidyl-2-C-methyl-D-erythritol from CTP and 2-C-methyl-D-erythritol 4-phosphate (MEP). In Shewanella halifaxensis (strain HAW-EB4), this protein is 2-C-methyl-D-erythritol 4-phosphate cytidylyltransferase.